We begin with the raw amino-acid sequence, 52 residues long: UPF0181 protein NTHI1697 (52 aa).

This sequence belongs to the UPF0181 family.

In Haemophilus influenzae (strain 86-028NP), this protein is UPF0181 protein NTHI1697.